The following is a 514-amino-acid chain: Serine--tRNA ligase, cytoplasmic (514 aa).

Position 1 is an N-acetylmethionine (Met-1). The interval 9–61 is interaction with tRNA; that stretch reads RVDKGGDPALIRETQEKRFKDPGLVDQLVKADSEWRRCRFRADNLNKLKNLCS. Residue Ser-241 is modified to Phosphoserine. Residues Thr-271 and Arg-302 each coordinate L-serine. ATP is bound by residues 302-304 and 318-321; these read RQE and VHQF. Lys-323 is modified (N6-acetyllysine). Glu-325 serves as a coordination point for L-serine. ATP is bound at residue 391–394; sequence ELVS. Residue Asn-427 participates in L-serine binding. The segment at 471–514 is disordered; it reads VKPAPIDQEPSKKQKKQHEGSKKKAAARDVALESRLQNMEVTDA. Positions 479–502 are enriched in basic and acidic residues; that stretch reads EPSKKQKKQHEGSKKKAAARDVAL. The Nuclear localization signal motif lies at 482-494; it reads KKQKKQHEGSKKK. Residues 505–514 show a composition bias toward polar residues; sequence RLQNMEVTDA.

Belongs to the class-II aminoacyl-tRNA synthetase family. Type-1 seryl-tRNA synthetase subfamily. As to quaternary structure, homodimer. The tRNA molecule may bind across the dimer. Interacts with SIRT2. Interacts with METTL6; interaction is required for the tRNA N(3)-methylcytidine methyltransferase activity of METTL6.

The protein localises to the cytoplasm. It is found in the nucleus. It catalyses the reaction tRNA(Ser) + L-serine + ATP = L-seryl-tRNA(Ser) + AMP + diphosphate + H(+). It carries out the reaction tRNA(Sec) + L-serine + ATP = L-seryl-tRNA(Sec) + AMP + diphosphate + H(+). It functions in the pathway aminoacyl-tRNA biosynthesis; selenocysteinyl-tRNA(Sec) biosynthesis; L-seryl-tRNA(Sec) from L-serine and tRNA(Sec): step 1/1. Catalyzes the attachment of serine to tRNA(Ser) in a two-step reaction: serine is first activated by ATP to form Ser-AMP and then transferred to the acceptor end of tRNA(Ser). Is probably also able to aminoacylate tRNA(Sec) with serine, to form the misacylated tRNA L-seryl-tRNA(Sec), which will be further converted into selenocysteinyl-tRNA(Sec). In the nucleus, binds to the VEGFA core promoter and prevents MYC binding and transcriptional activation by MYC. Recruits SIRT2 to the VEGFA promoter, promoting deacetylation of histone H4 at 'Lys-16' (H4K16). Thereby, inhibits the production of VEGFA and sprouting angiogenesis mediated by VEGFA. This Macaca fascicularis (Crab-eating macaque) protein is Serine--tRNA ligase, cytoplasmic (SARS1).